The chain runs to 657 residues: tRNA 5-methylaminomethyl-2-thiouridine biosynthesis bifunctional protein MnmC (657 aa).

Residues methionine 1–alanine 239 form a tRNA (mnm(5)s(2)U34)-methyltransferase region. The interval isoleucine 263 to alanine 657 is FAD-dependent cmnm(5)s(2)U34 oxidoreductase.

It in the N-terminal section; belongs to the methyltransferase superfamily. tRNA (mnm(5)s(2)U34)-methyltransferase family. The protein in the C-terminal section; belongs to the DAO family. FAD serves as cofactor.

Its subcellular location is the cytoplasm. The enzyme catalyses 5-aminomethyl-2-thiouridine(34) in tRNA + S-adenosyl-L-methionine = 5-methylaminomethyl-2-thiouridine(34) in tRNA + S-adenosyl-L-homocysteine + H(+). Catalyzes the last two steps in the biosynthesis of 5-methylaminomethyl-2-thiouridine (mnm(5)s(2)U) at the wobble position (U34) in tRNA. Catalyzes the FAD-dependent demodification of cmnm(5)s(2)U34 to nm(5)s(2)U34, followed by the transfer of a methyl group from S-adenosyl-L-methionine to nm(5)s(2)U34, to form mnm(5)s(2)U34. The protein is tRNA 5-methylaminomethyl-2-thiouridine biosynthesis bifunctional protein MnmC of Burkholderia pseudomallei (strain 668).